The sequence spans 168 residues: UPF0304 protein MJECS11 (168 aa).

Belongs to the UPF0304 family.

This is UPF0304 protein MJECS11 from Methanocaldococcus jannaschii (strain ATCC 43067 / DSM 2661 / JAL-1 / JCM 10045 / NBRC 100440) (Methanococcus jannaschii).